The following is a 210-amino-acid chain: Scoloptoxin SSD976 (210 aa).

An N-terminal signal peptide occupies residues 1–23; sequence MNILLSSTLFVLLMFQIIGSGMG.

Contains 3 disulfide bonds. In terms of tissue distribution, expressed by the venom gland.

The protein localises to the secreted. Functionally, voltage-gated calcium channel inhibitor. The sequence is that of Scoloptoxin SSD976 from Scolopendra dehaani (Thai centipede).